The chain runs to 447 residues: Tryptophan 5-hydroxylase 1 (447 aa).

The 76-residue stretch at T22–Q97 folds into the ACT domain. S61 bears the Phosphoserine; by PKA mark. The L-tryptophan site is built by Y238, R260, and T268. H275, H280, and E320 together coordinate Fe cation. L-tryptophan-binding residues include S339 and I369.

It belongs to the biopterin-dependent aromatic amino acid hydroxylase family. Homotetramer. Interacts with DNAJC12. It depends on Fe(2+) as a cofactor. Ubiquitinated, leading to its degradation by the proteasome. Ubiquitinated is triggered by phosphorylation. In terms of processing, phosphorylated; triggering degradation by the proteasome.

The enzyme catalyses (6R)-L-erythro-5,6,7,8-tetrahydrobiopterin + L-tryptophan + O2 = 5-hydroxy-L-tryptophan + (4aS,6R)-4a-hydroxy-L-erythro-5,6,7,8-tetrahydrobiopterin. It participates in aromatic compound metabolism; serotonin biosynthesis; serotonin from L-tryptophan: step 1/2. In terms of biological role, oxidizes L-tryptophan to 5-hydroxy-l-tryptophan in the rate-determining step of serotonin biosynthesis. The polypeptide is Tryptophan 5-hydroxylase 1 (Mus musculus (Mouse)).